Consider the following 529-residue polypeptide: Bifunctional purine biosynthesis protein PurH (529 aa).

One can recognise an MGS-like domain in the interval 2–149 (TDLHPVRRAL…KNHAFVNVVV (148 aa)).

Belongs to the PurH family.

It carries out the reaction (6R)-10-formyltetrahydrofolate + 5-amino-1-(5-phospho-beta-D-ribosyl)imidazole-4-carboxamide = 5-formamido-1-(5-phospho-D-ribosyl)imidazole-4-carboxamide + (6S)-5,6,7,8-tetrahydrofolate. The enzyme catalyses IMP + H2O = 5-formamido-1-(5-phospho-D-ribosyl)imidazole-4-carboxamide. Its pathway is purine metabolism; IMP biosynthesis via de novo pathway; 5-formamido-1-(5-phospho-D-ribosyl)imidazole-4-carboxamide from 5-amino-1-(5-phospho-D-ribosyl)imidazole-4-carboxamide (10-formyl THF route): step 1/1. It functions in the pathway purine metabolism; IMP biosynthesis via de novo pathway; IMP from 5-formamido-1-(5-phospho-D-ribosyl)imidazole-4-carboxamide: step 1/1. The sequence is that of Bifunctional purine biosynthesis protein PurH from Ruegeria sp. (strain TM1040) (Silicibacter sp.).